The chain runs to 465 residues: 3-isopropylmalate dehydratase large subunit (465 aa).

3 residues coordinate [4Fe-4S] cluster: Cys347, Cys407, and Cys410.

It belongs to the aconitase/IPM isomerase family. LeuC type 1 subfamily. As to quaternary structure, heterodimer of LeuC and LeuD. The cofactor is [4Fe-4S] cluster.

The catalysed reaction is (2R,3S)-3-isopropylmalate = (2S)-2-isopropylmalate. It participates in amino-acid biosynthesis; L-leucine biosynthesis; L-leucine from 3-methyl-2-oxobutanoate: step 2/4. Its function is as follows. Catalyzes the isomerization between 2-isopropylmalate and 3-isopropylmalate, via the formation of 2-isopropylmaleate. This Buchnera aphidicola subsp. Pemphigus spyrothecae protein is 3-isopropylmalate dehydratase large subunit.